Reading from the N-terminus, the 24-residue chain is Humanin-like 3 (24 aa).

Belongs to the humanin family. Highly expressed in testis. Also expressed in kidney, heart, skeletal muscles and brain.

It is found in the secreted. Its subcellular location is the cytoplasm. In terms of biological role, plays a role as a neuroprotective and antiapoptotic factor. This chain is Humanin-like 3, found in Homo sapiens (Human).